The sequence spans 607 residues: MPDEFNLKSFLADLPHLPGVYRHLDAAGEVMYVGKARDLKKRVSSYFQKTLASPRIAQMVSKVVRLEVTVTRSEAEALILENNLIKSLRPRYNILFRDDKSYPYLLITAHEWPRIAYYRGSTSKRGQYFGPYPNSWAVRETIQILQKVFRLRTCEDTVFANRSRPCLLYQIGRCSGPCVQAIDAEDYRRDVQRAARFLNGEAREVMDEIEARMQQASGELRFEEAAVLRDQMGSLSKVLHQQTMENVGGEDTDVIAVASAGGKVCVNLAMVRGGRHLGDKPFFPSHADGEEAAQVQEAFIAQHYADNVLPPVLVCSHALPDVDLIGLLSEQAGTRCRVLTRPQGVRRSWLEQAQKNAEMALARALTESGARAARTLSLAEALDLDTDEAALDALRIECFDISHTAGEATQASCVVFLHHDMQPSLYRRYNIVGITPGDDYAAMRQVLTRRFAKVTDGEAPMPGLVLIDGGKGQVEVARQVFVELGLDIGALVGVAKGEGRKVGLETLVFADARAPLALGKASAALMLIAQVRDEAHRFAITGMRAKRAKTRNVSRLEEIEGVGAKRRQRLLARFGGLSGVTSASIEDLASVDGISMDLAERIYDALH.

The GIY-YIG domain occupies 16–94; that stretch reads HLPGVYRHLD…IKSLRPRYNI (79 aa). Residues 203-238 enclose the UVR domain; the sequence is REVMDEIEARMQQASGELRFEEAAVLRDQMGSLSKV.

This sequence belongs to the UvrC family. Interacts with UvrB in an incision complex.

It localises to the cytoplasm. Its function is as follows. The UvrABC repair system catalyzes the recognition and processing of DNA lesions. UvrC both incises the 5' and 3' sides of the lesion. The N-terminal half is responsible for the 3' incision and the C-terminal half is responsible for the 5' incision. The chain is UvrABC system protein C from Bordetella avium (strain 197N).